Here is a 351-residue protein sequence, read N- to C-terminus: Biotin synthase (351 aa).

The Radical SAM core domain occupies 49-265 (NRVRIHILDN…LSVFRLVNPD (217 aa)). 3 residues coordinate [4Fe-4S] cluster: Cys64, Cys68, and Cys71. [2Fe-2S] cluster-binding residues include Cys108, Cys140, Cys200, and Arg269.

The protein belongs to the radical SAM superfamily. Biotin synthase family. As to quaternary structure, homodimer. [4Fe-4S] cluster serves as cofactor. [2Fe-2S] cluster is required as a cofactor.

The enzyme catalyses (4R,5S)-dethiobiotin + (sulfur carrier)-SH + 2 reduced [2Fe-2S]-[ferredoxin] + 2 S-adenosyl-L-methionine = (sulfur carrier)-H + biotin + 2 5'-deoxyadenosine + 2 L-methionine + 2 oxidized [2Fe-2S]-[ferredoxin]. It participates in cofactor biosynthesis; biotin biosynthesis; biotin from 7,8-diaminononanoate: step 2/2. Functionally, catalyzes the conversion of dethiobiotin (DTB) to biotin by the insertion of a sulfur atom into dethiobiotin via a radical-based mechanism. In Leptospira biflexa serovar Patoc (strain Patoc 1 / Ames), this protein is Biotin synthase.